The chain runs to 739 residues: Vascular cell adhesion protein 1 (739 aa).

A signal peptide spans 1 to 24 (MPGKMVVILGASNILWIMFAASQA). 7 consecutive Ig-like C2-type domains span residues 25–105 (FKIE…RKLE), 109–212 (QVEI…TVRQ), 223–309 (PKNT…LIVQ), 312–399 (PFTV…IQVE), 408–506 (EIEM…QTLY), 511–595 (PRDT…VELI), and 600–684 (PKDI…LTLD). Residues 25 to 698 (FKIETTPESR…ENNKDYFSPE (674 aa)) are Extracellular-facing. 5 disulfides stabilise this stretch: C47/C95, C52/C99, C137/C195, C246/C291, and C335/C383. N273, N365, N417, N463, N531, and N561 each carry an N-linked (GlcNAc...) asparagine glycan. C534 and C579 form a disulfide bridge. Residues 699–720 (LLVLYFASSLIIPAIGMIIYFA) form a helical membrane-spanning segment. The Cytoplasmic segment spans residues 721 to 739 (RKANMKGSYSLVEAQKSKV).

Post-translationally, cleaved by the metalloproteinase ADAM17 to generate the soluble form. In terms of processing, sialoglycoprotein. Ubiquitinated by TRIM65 via 'Lys-48'-linked ubiquitination; leading to proteasomal degradation. As to expression, expressed on inflamed vascular endothelium, as well as on macrophage-like and dendritic cell types in both normal and inflamed tissue.

The protein resides in the cell membrane. It localises to the secreted. Its function is as follows. Cell adhesion glycoprotein predominantly expressed on the surface of endothelial cells that plays an important role in immune surveillance and inflammation. Acts as a major regulator of leukocyte adhesion to the endothelium through interaction with different types of integrins. During inflammatory responses, binds ligands on the surface of activated endothelial cells to initiate the activation of calcium channels and the plasma membrane-associated small GTPase RAC1 leading to leukocyte transendothelial migration. Also serves as a quality-control checkpoint for entry into bone marrow by providing a 'don't-eat-me' stamping in the context of major histocompatibility complex (MHC) class-I presentation. The protein is Vascular cell adhesion protein 1 (VCAM1) of Homo sapiens (Human).